The sequence spans 353 residues: Paraneoplastic antigen Ma1 homolog (353 aa).

It belongs to the PNMA family.

The protein localises to the nucleus. It localises to the nucleolus. The polypeptide is Paraneoplastic antigen Ma1 homolog (PNMA1) (Bos taurus (Bovine)).